The sequence spans 619 residues: Chaperone protein HscA homolog (619 aa).

The protein belongs to the heat shock protein 70 family.

Its function is as follows. Chaperone involved in the maturation of iron-sulfur cluster-containing proteins. Has a low intrinsic ATPase activity which is markedly stimulated by HscB. This Acinetobacter baumannii (strain ATCC 17978 / DSM 105126 / CIP 53.77 / LMG 1025 / NCDC KC755 / 5377) protein is Chaperone protein HscA homolog.